Reading from the N-terminus, the 329-residue chain is Taste receptor type 2 member 102 (329 aa).

Over Met-1–Asn-9 the chain is Extracellular. The chain crosses the membrane as a helical span at residues Phe-10–Val-30. The Cytoplasmic segment spans residues Leu-31–Asp-47. The helical transmembrane segment at Lys-48–Phe-68 threads the bilayer. Topologically, residues Lys-69–Ile-85 are extracellular. Residues Ile-86–Tyr-108 traverse the membrane as a helical segment. Residues Leu-109–Gln-129 lie on the Cytoplasmic side of the membrane. A helical transmembrane segment spans residues Leu-130–Met-150. At Leu-151 to Asn-181 the chain is on the extracellular side. An N-linked (GlcNAc...) asparagine glycan is attached at Asn-161. The chain crosses the membrane as a helical span at residues Met-182–Phe-202. Residues Ser-203–Arg-231 lie on the Cytoplasmic side of the membrane. Residues Ile-232–Ile-252 traverse the membrane as a helical segment. Residues Ala-253–Asp-262 lie on the Extracellular side of the membrane. The chain crosses the membrane as a helical span at residues Ile-263 to Gly-283. Over Asn-284–Arg-329 the chain is Cytoplasmic.

This sequence belongs to the G-protein coupled receptor T2R family.

It is found in the membrane. Putative taste receptor which may play a role in the perception of bitterness. This chain is Taste receptor type 2 member 102, found in Mus musculus (Mouse).